The sequence spans 396 residues: Inositol-tetrakisphosphate 1-kinase (396 aa).

K18 contacts 1D-myo-inositol 1,3,4-trisphosphate. The ATP site is built by R106 and K157. One can recognise an ATP-grasp domain in the interval 117-325 (ETYMQDERIC…ITTILQRPDQ (209 aa)). Residues H167 and K199 each coordinate 1D-myo-inositol 1,3,4-trisphosphate. Residues 188–199 (QSFISHNAVLYK), S214, S232, and S236 contribute to the ATP site. Residues D281, D295, and N297 each coordinate Mg(2+). N297 lines the 1D-myo-inositol 1,3,4-trisphosphate pocket.

The protein belongs to the ITPK1 family. In terms of assembly, monomer. The cofactor is Mg(2+).

The catalysed reaction is 1D-myo-inositol 3,4,5,6-tetrakisphosphate + ATP = 1D-myo-inositol 1,3,4,5,6-pentakisphosphate + ADP + H(+). It catalyses the reaction 1D-myo-inositol 1,3,4-trisphosphate + ATP = 1D-myo-inositol 1,3,4,5-tetrakisphosphate + ADP + H(+). The enzyme catalyses 1D-myo-inositol 1,3,4-trisphosphate + ATP = 1D-myo-inositol 1,3,4,6-tetrakisphosphate + ADP + H(+). It carries out the reaction 1D-myo-inositol 3,4,6-trisphosphate + ATP = 1D-myo-inositol 1,3,4,6-tetrakisphosphate + ADP + H(+). The catalysed reaction is 1D-myo-inositol 1,3,4-trisphosphate + 1D-myo-inositol 1,3,4,5,6-pentakisphosphate = 1D-myo-inositol 3,4,5,6-tetrakisphosphate + 1D-myo-inositol 1,3,4,6-tetrakisphosphate. It catalyses the reaction 1D-myo-inositol 1,3,4-trisphosphate + 1D-myo-inositol 1,3,4,5,6-pentakisphosphate = 1D-myo-inositol 3,4,5,6-tetrakisphosphate + 1D-myo-inositol 1,3,4,5-tetrakisphosphate. Functionally, kinase that can phosphorylate various inositol polyphosphate such as Ins(3,4,5,6)P4 or Ins(1,3,4)P3. Phosphorylates Ins(3,4,5,6)P4 at position 1 to form Ins(1,3,4,5,6)P5. This reaction is thought to have regulatory importance, since Ins(3,4,5,6)P4 is an inhibitor of plasma membrane Ca(2+)-activated Cl(-) channels, while Ins(1,3,4,5,6)P5 is not. Also phosphorylates Ins(1,3,4)P3 on O-5 and O-6 to form Ins(1,3,4,6)P4, an essential molecule in the hexakisphosphate (InsP6) pathway. Also acts as an inositol polyphosphate phosphatase that dephosphorylates Ins(1,3,4,5)P4 and Ins(1,3,4,6)P4 to Ins(1,3,4)P3, and Ins(1,3,4,5,6)P5 to Ins(3,4,5,6)P4. May also act as an isomerase that interconverts the inositol tetrakisphosphate isomers Ins(1,3,4,5)P4 and Ins(1,3,4,6)P4 in the presence of ADP and magnesium. Probably acts as the rate-limiting enzyme of the InsP6 pathway. Modifies TNF-alpha-induced apoptosis by interfering with the activation of TNFRSF1A-associated death domain. Plays an important role in MLKL-mediated necroptosis. Produces highly phosphorylated inositol phosphates such as inositolhexakisphosphate (InsP6) which bind to MLKL mediating the release of an N-terminal auto-inhibitory region leading to its activation. Essential for activated phospho-MLKL to oligomerize and localize to the cell membrane during necroptosis. This chain is Inositol-tetrakisphosphate 1-kinase (itpk1), found in Xenopus laevis (African clawed frog).